We begin with the raw amino-acid sequence, 135 residues long: Probable 5-hydroxyisourate hydrolase R09H10.3 (135 aa).

An N-terminal signal peptide occupies residues 1-20; the sequence is MNKFSLFFALTATLMTITES. Residues His-30, Arg-68, and Tyr-132 each contribute to the substrate site.

This sequence belongs to the transthyretin family. 5-hydroxyisourate hydrolase subfamily. Homotetramer.

The catalysed reaction is 5-hydroxyisourate + H2O = 5-hydroxy-2-oxo-4-ureido-2,5-dihydro-1H-imidazole-5-carboxylate + H(+). In terms of biological role, catalyzes the hydrolysis of 5-hydroxyisourate (HIU) to 2-oxo-4-hydroxy-4-carboxy-5-ureidoimidazoline (OHCU). This chain is Probable 5-hydroxyisourate hydrolase R09H10.3, found in Caenorhabditis elegans.